Reading from the N-terminus, the 80-residue chain is Conotoxin Cl9.5 (80 aa).

Residues 1–23 (MNCYLILTVALLLTSAMTGTTTA) form the signal peptide. Positions 24-37 (GQLNTKGVTLREDD) are excised as a propeptide. 3 disulfide bridges follow: Cys42–Cys59, Cys47–Cys69, and Cys49–Cys74.

In terms of tissue distribution, expressed by the venom duct.

It is found in the secreted. The sequence is that of Conotoxin Cl9.5 from Californiconus californicus (California cone).